A 212-amino-acid polypeptide reads, in one-letter code: Putative 3-methyladenine DNA glycosylase (212 aa).

It belongs to the DNA glycosylase MPG family.

This is Putative 3-methyladenine DNA glycosylase from Psychrobacter cryohalolentis (strain ATCC BAA-1226 / DSM 17306 / VKM B-2378 / K5).